Consider the following 367-residue polypeptide: MMETQLYIGIMSGTSMDGADAVLIRMDGGKWLGAEGHAFTPYPGRLRRKLLDLQDTGADELHRSRMLSQELSRLYAQTAAELLCSQNLAPSDITALGCHGQTVRHAPEHSYSVQLADLPLLAERTQIFTVGDFRSRDLAAGGQGAPLVPAFHEALFRDDRETRAVLNIGGIANISVLPPDAPAFGFDTGPGNMLMDAWMQAHWQLPYDKNGAKAAQGNILPQLLDRLLAHPYFAQPHPKSTGRELFALNWLETYLDGGENRYDVLRTLSRFTAQTVFDAVSHAAADARQMYICGGGIRNPVLMADLAECFGTRVSLHSTAELNLDPQWVEAAAFAWMAACWVNRIPGSPHKATGASKPCILGAGYYY.

An ATP-binding site is contributed by 13-20; sequence GTSMDGAD.

The protein belongs to the anhydro-N-acetylmuramic acid kinase family.

The enzyme catalyses 1,6-anhydro-N-acetyl-beta-muramate + ATP + H2O = N-acetyl-D-muramate 6-phosphate + ADP + H(+). Its pathway is amino-sugar metabolism; 1,6-anhydro-N-acetylmuramate degradation. It participates in cell wall biogenesis; peptidoglycan recycling. Its function is as follows. Catalyzes the specific phosphorylation of 1,6-anhydro-N-acetylmuramic acid (anhMurNAc) with the simultaneous cleavage of the 1,6-anhydro ring, generating MurNAc-6-P. Is required for the utilization of anhMurNAc either imported from the medium or derived from its own cell wall murein, and thus plays a role in cell wall recycling. The protein is Anhydro-N-acetylmuramic acid kinase of Neisseria meningitidis serogroup A / serotype 4A (strain DSM 15465 / Z2491).